A 1064-amino-acid chain; its full sequence is Importin-13 homolog A (1064 aa).

An Importin N-terminal domain is found at 40–109; the sequence is ALPQIQQWLI…LDNLLLFLKT (70 aa). 2 disordered regions span residues 695 to 722 and 839 to 860; these read TTQQ…NNNN and NNKK…NENN. Residues 700–722 show a composition bias toward low complexity; that stretch reads NNNNNNNNNNNNNNNNNNNNNNN.

It belongs to the importin beta family. Forms a complex with an importin alpha subunit.

It localises to the cytoplasm. The protein resides in the nucleus envelope. Its function is as follows. Required for nuclear protein import and mediates docking of import substrate to distinct nucleoporins. The sequence is that of Importin-13 homolog A (ipo13A) from Dictyostelium discoideum (Social amoeba).